The following is a 110-amino-acid chain: U1-lycotoxin-Ls1cc (110 aa).

Positions 1 to 20 (MKFVLLFGVLLVTLFSYSSA) are cleaved as a signal peptide. Positions 21-44 (EMLDDFDQADEDELLSLIEKEEAR) are excised as a propeptide. 4 cysteine pairs are disulfide-bonded: C47-C62, C54-C71, C61-C89, and C73-C87.

The protein belongs to the neurotoxin 19 (CSTX) family. 03 subfamily. In terms of tissue distribution, expressed by the venom gland.

It is found in the secreted. The protein is U1-lycotoxin-Ls1cc of Lycosa singoriensis (Wolf spider).